Here is a 382-residue protein sequence, read N- to C-terminus: DnaJ homolog dnj-20 (382 aa).

The first 21 residues, 1–21, serve as a signal peptide directing secretion; the sequence is MRILNVSLLVLTAFLVDFVEC. The region spanning 24-89 is the J domain; the sequence is DFYKILGVSK…EKRAMYDRHG (66 aa).

The protein is DnaJ homolog dnj-20 of Caenorhabditis briggsae.